Consider the following 44-residue polypeptide: Photosystem I reaction center subunit IX (44 aa).

A helical transmembrane segment spans residues 7–27 (YLSVAPVLSTLWFGALAGLLI).

It belongs to the PsaJ family.

Its subcellular location is the plastid. The protein localises to the chloroplast thylakoid membrane. In terms of biological role, may help in the organization of the PsaE and PsaF subunits. The sequence is that of Photosystem I reaction center subunit IX from Coffea arabica (Arabian coffee).